We begin with the raw amino-acid sequence, 293 residues long: Oxidoreductase clz16 (293 aa).

It belongs to the asaB hydroxylase/desaturase family.

Its pathway is secondary metabolite biosynthesis. Functionally, oxidoreductase; part of the gene cluster that mediates the biosynthesis of squalestatin S1 (SQS1, also known as zaragozic acid A), a heavily oxidized fungal polyketide that offers potent cholesterol lowering activity by targeting squalene synthase (SS). SQS1 is composed of a 2,8-dioxobicyclic[3.2.1]octane-3,4,5-tricarboxyclic acid core that is connected to two lipophilic polyketide arms. These initial steps feature the priming of an unusual benzoic acid starter unit onto the highly reducing polyketide synthase clz14, followed by oxaloacetate extension and product release to generate a tricarboxylic acid containing product. The phenylalanine ammonia lyase (PAL) clz10 and the acyl-CoA ligase clz12 are involved in transforming phenylalanine into benzoyl-CoA. The citrate synthase-like protein clz17 is involved in connecting the C-alpha-carbons of the hexaketide chain and oxaloacetate to afford the tricarboxylic acid unit. The potential hydrolytic enzymes, clz11 and clz13, are in close proximity to pks2 and may participate in product release. On the other side, the tetraketide arm is synthesized by a the squalestatin tetraketide synthase clz2 and enzymatically esterified to the core in the last biosynthetic step, by the acetyltransferase clz6. The biosynthesis of the tetraketide must involve 3 rounds of chain extension. After the first and second rounds methyl-transfer occurs, and in all rounds of extension the ketoreductase and dehydratase are active. The enoyl reductase and C-MeT of clz2 are not active in the final round of extension. The acetyltransferase clz6 appears to have a broad substrate selectivity for its acyl CoA substrate, allowing the in vitro synthesis of novel squalestatins. The biosynthesis of SQS1 requires several oxidative steps likely performed by oxidoreductases clz3, clz15 and clz16. Finally, in support of the identification of the cluster as being responsible for SQS1 production, the cluster contains a gene encoding a putative squalene synthase (SS) clz20, suggesting a likely mechanism for self-resistance. The sequence is that of Oxidoreductase clz16 from Cochliobolus lunatus (Filamentous fungus).